The primary structure comprises 503 residues: MKKALLMILDGYGISSTTHGNAVKNAKTPHLDNLMNNNPTIMLQASGEAVGLPKNQIGNSEVGHLNIGAGRIIYTGLSLINKEIENKKFFTNQALLNAIDHAKKNNSKLHILGLVSNGGVHSHINHIYAIMELANQHNVPAILHIFGDGRDVPPTQLLADLDQLIKKAETTKTKIGTISGRFYAMDRDQRWDRIDLAYNNLLSNTGKSFADLKTYVKDSYQQNITDEFIVPAYNNNYKSDEITIQDNDSVVFANFRPDRARQLSHYVFGSNYYDHHPQLRRKNLYFVIMMQYEGINPSAICYPPKIEKNTLGEVLKNANKKQLRIAETEKYAHVTFFFDGGVEVEYQNEDKVLVPSRKDVKTYDLAPEMSAAAIVDQLLKVYTKYDLTVLNFANPDMVGHTGNYEATLKGLEALDHEIGRLLADAKKNNITVFFTADHGNAEEMIDENNQKVTKHTTNVVPFSITDPNVKFTKKEGILANVAPTILKYLEIQIPEEMDQEPLI.

The Mn(2+) site is built by Asp10 and Ser60. Ser60 functions as the Phosphoserine intermediate in the catalytic mechanism. Substrate-binding positions include His121, 150–151 (RD), Arg181, Arg187, 256–259 (RPDR), and Lys330. Mn(2+)-binding residues include Asp396, His400, Asp437, His438, and His455.

It belongs to the BPG-independent phosphoglycerate mutase family. Monomer. Mn(2+) is required as a cofactor.

It carries out the reaction (2R)-2-phosphoglycerate = (2R)-3-phosphoglycerate. Its pathway is carbohydrate degradation; glycolysis; pyruvate from D-glyceraldehyde 3-phosphate: step 3/5. Catalyzes the interconversion of 2-phosphoglycerate and 3-phosphoglycerate. This chain is 2,3-bisphosphoglycerate-independent phosphoglycerate mutase, found in Mycoplasmoides gallisepticum (strain R(low / passage 15 / clone 2)) (Mycoplasma gallisepticum).